Reading from the N-terminus, the 309-residue chain is CDK-activating kinase assembly factor MAT1 (309 aa).

At M1 the chain carries N-acetylmethionine. The segment at 6-50 adopts an RING-type zinc-finger fold; it reads CPRCKTTKYRNPSLKLMVNVCGHTLCESCVDLLFVRGAGNCPECG. Phosphothreonine is present on T51. Residues 142–161 form the UIM domain; the sequence is REQEELEEALEVERQEHEQR. At S279 the chain carries Phosphoserine.

In terms of assembly, associates primarily with CDK7 and cyclin H to form the CAK complex. CAK can further associate with the core-TFIIH to form the TFIIH basal transcription factor.

Its subcellular location is the nucleus. Stabilizes the cyclin H-CDK7 complex to form a functional CDK-activating kinase (CAK) enzymatic complex. CAK activates the cyclin-associated kinases CDK1, CDK2, CDK4 and CDK6 by threonine phosphorylation. CAK complexed to the core-TFIIH basal transcription factor activates RNA polymerase II by serine phosphorylation of the repetitive C-terminal domain (CTD) of its large subunit (POLR2A), allowing its escape from the promoter and elongation of the transcripts. Involved in cell cycle control and in RNA transcription by RNA polymerase II. The protein is CDK-activating kinase assembly factor MAT1 (Mnat1) of Mus musculus (Mouse).